Reading from the N-terminus, the 540-residue chain is Phenylalanine--tRNA ligase beta subunit (540 aa).

The 78-residue stretch at 270 to 347 (MTPRTLNVPR…IGYGFDKIKS (78 aa)) folds into the B5 domain. Positions 325, 331, 334, and 335 each coordinate Mg(2+).

This sequence belongs to the phenylalanyl-tRNA synthetase beta subunit family. Type 2 subfamily. Tetramer of two alpha and two beta subunits. It depends on Mg(2+) as a cofactor.

It is found in the cytoplasm. It carries out the reaction tRNA(Phe) + L-phenylalanine + ATP = L-phenylalanyl-tRNA(Phe) + AMP + diphosphate + H(+). The sequence is that of Phenylalanine--tRNA ligase beta subunit from Methanococcoides burtonii (strain DSM 6242 / NBRC 107633 / OCM 468 / ACE-M).